The chain runs to 473 residues: Photosystem II CP43 reaction center protein (473 aa).

A propeptide spanning residues Met1–Glu14 is cleaved from the precursor. Thr15 is subject to N-acetylthreonine. Thr15 bears the Phosphothreonine mark. The next 5 membrane-spanning stretches (helical) occupy residues Leu69–Ala93, Leu134–Asn155, Lys178–Thr200, Lys255–Ser275, and Trp291–Ala312. [CaMn4O5] cluster is bound at residue Glu367. A helical transmembrane segment spans residues Arg447 to Pro471.

It belongs to the PsbB/PsbC family. PsbC subfamily. In terms of assembly, PSII is composed of 1 copy each of membrane proteins PsbA, PsbB, PsbC, PsbD, PsbE, PsbF, PsbH, PsbI, PsbJ, PsbK, PsbL, PsbM, PsbT, PsbX, PsbY, PsbZ, Psb30/Ycf12, at least 3 peripheral proteins of the oxygen-evolving complex and a large number of cofactors. It forms dimeric complexes. Requires Binds multiple chlorophylls and provides some of the ligands for the Ca-4Mn-5O cluster of the oxygen-evolving complex. It may also provide a ligand for a Cl- that is required for oxygen evolution. PSII binds additional chlorophylls, carotenoids and specific lipids. as cofactor. Phosphorylated on threonine residue(s).

The protein localises to the plastid. It is found in the chloroplast thylakoid membrane. Functionally, one of the components of the core complex of photosystem II (PSII). It binds chlorophyll and helps catalyze the primary light-induced photochemical processes of PSII. PSII is a light-driven water:plastoquinone oxidoreductase, using light energy to abstract electrons from H(2)O, generating O(2) and a proton gradient subsequently used for ATP formation. This is Photosystem II CP43 reaction center protein from Marchantia polymorpha (Common liverwort).